A 118-amino-acid polypeptide reads, in one-letter code: Large ribosomal subunit protein uL22 (118 aa).

The protein belongs to the universal ribosomal protein uL22 family. As to quaternary structure, part of the 50S ribosomal subunit.

Functionally, this protein binds specifically to 23S rRNA; its binding is stimulated by other ribosomal proteins, e.g. L4, L17, and L20. It is important during the early stages of 50S assembly. It makes multiple contacts with different domains of the 23S rRNA in the assembled 50S subunit and ribosome. Its function is as follows. The globular domain of the protein is located near the polypeptide exit tunnel on the outside of the subunit, while an extended beta-hairpin is found that lines the wall of the exit tunnel in the center of the 70S ribosome. This chain is Large ribosomal subunit protein uL22, found in Levilactobacillus brevis (strain ATCC 367 / BCRC 12310 / CIP 105137 / JCM 1170 / LMG 11437 / NCIMB 947 / NCTC 947) (Lactobacillus brevis).